The primary structure comprises 471 residues: WASH complex subunit 1 (471 aa).

The tract at residues 1 to 54 (MTPTGTQHSLAGQTYAVPLIQPDLRREEAIQQVADALQYLQKVSGDIFSRISQR) is required for WASH complex assembly. Residues 1-167 (MTPTGTQHSL…EGLGGLPSNI (167 aa)) form a WHD1 region. The interval 297-471 (EDGVLTARPP…GEEDEDDWES (175 aa)) is disordered. The segment covering 304 to 336 (RPPPPPPPPPPPAPAVLMSVPPPPPPPQAPPGQ) has biased composition (pro residues). The segment at 353-471 (QGAPKEVVDP…GEEDEDDWES (119 aa)) is VCA. A WH2 domain is found at 365 to 387 (GRATLLESIRQAGGIGKAKLRSV). The span at 386 to 402 (SVKERKLEKKKQKEQEQ) shows a compositional bias: basic and acidic residues. Over residues 428 to 442 (SGKGPGSGASEGPGG) the composition is skewed to gly residues. A compositionally biased stretch (acidic residues) spans 462-471 (GEEDEDDWES).

This sequence belongs to the WASH1 family. Component of the WASH core complex also described as WASH regulatory complex SHRC composed of WASHC1, WASHC2, WASHC3, WASHC4 and WASHC5. The WASH core complex associates with the F-actin-capping protein dimer (formed by CAPZA1, CAPZA2 or CAPZA3 and CAPZB); the assembly has been initially described as WASH complex. Interacts (via WHD1 region) with WASHC2; the interaction is direct. Interacts with alpha-tubulin. Interacts with BECN1; WASHC1 and AMBRA1 can competitively interact with BECN1. Interacts with BLOC1S2; may associate with the BLOC-1 complex. Interacts with tubulin gamma chain (TUBG1 or TUBG2). Interacts with TBC1D23.

The protein localises to the early endosome membrane. The protein resides in the recycling endosome membrane. It is found in the late endosome. Its subcellular location is the cytoplasmic vesicle. It localises to the autophagosome. The protein localises to the cytoplasm. The protein resides in the cytoskeleton. It is found in the microtubule organizing center. Its subcellular location is the centrosome. It localises to the centriole. Acts as a component of the WASH core complex that functions as a nucleation-promoting factor (NPF) at the surface of endosomes, where it recruits and activates the Arp2/3 complex to induce actin polymerization, playing a key role in the fission of tubules that serve as transport intermediates during endosome sorting. Involved in endocytic trafficking of EGF. Involved in transferrin receptor recycling. Regulates the trafficking of endosomal alpha5beta1 integrin to the plasma membrane and involved in invasive cell migration. In T-cells involved in endosome-to-membrane recycling of receptors including T-cell receptor (TCR), CD28 and ITGAL; proposed to be implicated in T-cell proliferation and effector function. In dendritic cells involved in endosome-to-membrane recycling of major histocompatibility complex (MHC) class II probably involving retromer and subsequently allowing antigen sampling, loading and presentation during T-cell activation. Involved in negative regulation of autophagy independently from its role in endosomal sorting by inhibiting BECN1 ubiquitination to inactivate PIK3C3/Vps34 activity. This is WASH complex subunit 1 from Bos taurus (Bovine).